A 396-amino-acid chain; its full sequence is Zinc metalloproteinase nas-24 (396 aa).

The N-terminal stretch at 1–20 (MTRVVHIIGAAFLLSSYAYC) is a signal peptide. One can recognise a Peptidase M12A domain in the interval 44-230 (ERLGSKWLGG…YKINQYYGCG (187 aa)). 2 N-linked (GlcNAc...) asparagine glycosylation sites follow: asparagine 63 and asparagine 79. 4 disulfides stabilise this stretch: cysteine 82/cysteine 229, cysteine 105/cysteine 129, cysteine 231/cysteine 251, and cysteine 253/cysteine 262. Histidine 137 provides a ligand contact to Zn(2+). Residue glutamate 138 is part of the active site. Zn(2+)-binding residues include histidine 141 and histidine 147. The EGF-like domain occupies 224 to 263 (NQYYGCGCSTQLECKNGGYTSPSDCSRCNCPKGFFGKLCN). A glycan (N-linked (GlcNAc...) asparagine) is linked at asparagine 310.

It depends on Zn(2+) as a cofactor.

The protein resides in the secreted. Functionally, metalloprotease. This is Zinc metalloproteinase nas-24 (nas-24) from Caenorhabditis elegans.